The following is a 457-amino-acid chain: Mesentericin Y105 secretion protein MesE (457 aa).

Residues T22–A42 traverse the membrane as a helical segment.

The protein belongs to the membrane fusion protein (MFP) (TC 8.A.1) family.

It localises to the membrane. Its function is as follows. Involved in the secretion of mesentericin Y105. This Leuconostoc mesenteroides protein is Mesentericin Y105 secretion protein MesE (mesE).